The following is a 176-amino-acid chain: Probable inosine/xanthosine triphosphatase (176 aa).

Residue Asp-36 coordinates Mg(2+).

The protein belongs to the YjjX NTPase family. In terms of assembly, homodimer. Requires Mg(2+) as cofactor. Mn(2+) is required as a cofactor.

The enzyme catalyses XTP + H2O = XDP + phosphate + H(+). It catalyses the reaction ITP + H2O = IDP + phosphate + H(+). Functionally, phosphatase that hydrolyzes non-canonical purine nucleotides such as XTP and ITP to their respective diphosphate derivatives. Probably excludes non-canonical purines from DNA/RNA precursor pool, thus preventing their incorporation into DNA/RNA and avoiding chromosomal lesions. This chain is Probable inosine/xanthosine triphosphatase, found in Saccharolobus islandicus (strain Y.G.57.14 / Yellowstone #1) (Sulfolobus islandicus).